A 150-amino-acid chain; its full sequence is Nucleoside diphosphate kinase (150 aa).

Lys9, Phe57, Arg85, Thr91, Arg102, and Asn112 together coordinate ATP. His115 functions as the Pros-phosphohistidine intermediate in the catalytic mechanism.

Belongs to the NDK family. Mg(2+) serves as cofactor.

It is found in the cytoplasm. The catalysed reaction is a 2'-deoxyribonucleoside 5'-diphosphate + ATP = a 2'-deoxyribonucleoside 5'-triphosphate + ADP. It carries out the reaction a ribonucleoside 5'-diphosphate + ATP = a ribonucleoside 5'-triphosphate + ADP. Major role in the synthesis of nucleoside triphosphates other than ATP. The ATP gamma phosphate is transferred to the NDP beta phosphate via a ping-pong mechanism, using a phosphorylated active-site intermediate. The sequence is that of Nucleoside diphosphate kinase from Methanoregula boonei (strain DSM 21154 / JCM 14090 / 6A8).